A 118-amino-acid polypeptide reads, in one-letter code: uncharacterized protein (118 aa).

Residues 1–26 form the signal peptide; the sequence is MTKLKMLSMLTVMIASLFIFSSQALA. An SH3b domain is found at 30–104; sequence FTVSTSSGAP…VNIGYVSDTY (75 aa).

The protein to B.subtilis YraI.

This is an uncharacterized protein from Bacillus subtilis (strain 168).